Here is a 507-residue protein sequence, read N- to C-terminus: Bifunctional purine biosynthesis protein PurH (507 aa).

The 149-residue stretch at 1-149 folds into the MGS-like domain; it reads MSESKRIKTA…KNYNDVIIVA (149 aa).

Belongs to the PurH family.

The enzyme catalyses (6R)-10-formyltetrahydrofolate + 5-amino-1-(5-phospho-beta-D-ribosyl)imidazole-4-carboxamide = 5-formamido-1-(5-phospho-D-ribosyl)imidazole-4-carboxamide + (6S)-5,6,7,8-tetrahydrofolate. It carries out the reaction IMP + H2O = 5-formamido-1-(5-phospho-D-ribosyl)imidazole-4-carboxamide. It participates in purine metabolism; IMP biosynthesis via de novo pathway; 5-formamido-1-(5-phospho-D-ribosyl)imidazole-4-carboxamide from 5-amino-1-(5-phospho-D-ribosyl)imidazole-4-carboxamide (10-formyl THF route): step 1/1. The protein operates within purine metabolism; IMP biosynthesis via de novo pathway; IMP from 5-formamido-1-(5-phospho-D-ribosyl)imidazole-4-carboxamide: step 1/1. This is Bifunctional purine biosynthesis protein PurH from Bacteroides thetaiotaomicron (strain ATCC 29148 / DSM 2079 / JCM 5827 / CCUG 10774 / NCTC 10582 / VPI-5482 / E50).